The sequence spans 245 residues: 2,3-bisphosphoglycerate-dependent phosphoglycerate mutase (245 aa).

Substrate is bound by residues 8–15 (RHGQSLWN), 21–22 (TG), arginine 60, 87–90 (ERHY), lysine 98, 114–115 (RR), and 183–184 (GN). Histidine 9 serves as the catalytic Tele-phosphohistidine intermediate. The Proton donor/acceptor role is filled by glutamate 87.

This sequence belongs to the phosphoglycerate mutase family. BPG-dependent PGAM subfamily.

It catalyses the reaction (2R)-2-phosphoglycerate = (2R)-3-phosphoglycerate. It participates in carbohydrate degradation; glycolysis; pyruvate from D-glyceraldehyde 3-phosphate: step 3/5. Functionally, catalyzes the interconversion of 2-phosphoglycerate and 3-phosphoglycerate. This Bacillus cereus (strain AH187) protein is 2,3-bisphosphoglycerate-dependent phosphoglycerate mutase.